Consider the following 164-residue polypeptide: MKSVITTVVAAADAAGRFPSTSDLESVQGSIQRAAARLEAAEKLAANLDAVAKEAYDAAIKKYSYLNNAGEANSTDTFKAKCLRDIKHYLRLINYSLVVGGTGPLDEWGIAGQREVYRTLGLPTAPYVEALSFARNRGCSPRDLSAQALTEYNSLLDYVINSLS.

(2R,3E)-phycoerythrobilin is bound by residues cysteine 82 and cysteine 139.

The protein belongs to the phycobiliprotein family. As to quaternary structure, heterodimer of an alpha and a beta chain. In terms of processing, contains two covalently linked bilin chromophores.

The protein resides in the cellular thylakoid membrane. In terms of biological role, light-harvesting photosynthetic bile pigment-protein from the phycobiliprotein complex. This Synechocystis sp. (strain PCC 6701) protein is C-phycoerythrin alpha chain (cpeA).